The sequence spans 287 residues: 4-hydroxybenzoate octaprenyltransferase (287 aa).

Helical transmembrane passes span 21–41, 44–64, 91–111, 112–132, 139–159, 160–180, 211–231, 235–255, and 263–283; these read VGIF…AKGA, FKIA…GCIV, VTEA…LVLL, LNRL…VYPF, LPQL…FAAT, VGHV…WPIV, LMIG…GWYL, YWFY…QFLI, and CFAA…GILL.

Belongs to the UbiA prenyltransferase family. Mg(2+) serves as cofactor.

It is found in the cell inner membrane. It carries out the reaction all-trans-octaprenyl diphosphate + 4-hydroxybenzoate = 4-hydroxy-3-(all-trans-octaprenyl)benzoate + diphosphate. It participates in cofactor biosynthesis; ubiquinone biosynthesis. Functionally, catalyzes the prenylation of para-hydroxybenzoate (PHB) with an all-trans polyprenyl group. Mediates the second step in the final reaction sequence of ubiquinone-8 (UQ-8) biosynthesis, which is the condensation of the polyisoprenoid side chain with PHB, generating the first membrane-bound Q intermediate 3-octaprenyl-4-hydroxybenzoate. The polypeptide is 4-hydroxybenzoate octaprenyltransferase (Coxiella burnetii (strain RSA 331 / Henzerling II)).